Consider the following 1115-residue polypeptide: Tbc2 translation factor, chloroplastic (1115 aa).

Composition is skewed to low complexity over residues 69-87 (TASVPSTSGASPSGSQLSS) and 163-175 (RRAGSGASTSGRA). Disordered stretches follow at residues 69-90 (TASVPSTSGASPSGSQLSSKAL) and 163-210 (RRAG…SSSS). Residues 176–186 (RGWGSGPGRNG) show a composition bias toward gly residues. A compositionally biased stretch (low complexity) spans 187-210 (SGSSSVSVNGSGSSSNGSSSSSSS). 9 consecutive repeat copies span residues 483 to 521 (LVLELSRARLTSFSPLQLAKAVQGLAALRYRPSPEWVEA), 607 to 645 (LDLTSRLLAAGGFSGGELQQLLEGLTRLALQPPLEWMQA), 685 to 723 (LAATQANMKQLLADTTCSAALLTALRRLNIEPPPGWVGA), 724 to 763 (LLEESRSALKNRCTDLHLANLAGSLAAWGVRPDGRWAARL), 764 to 803 (MWRSQVLMNEDRMSPRALVALLQAMVSLGLSPNPVWTQLC), 804 to 842 (LQAAVRRASQPAFEPHHYGTLMASLHALGIQPPQEWLTR), 843 to 880 (MLLSTYRCWDRFSVTHWSSLLPALVLLKARPPREWLRR), 990 to 1029 (PAAHAATSTTTATAVAHPQPQLLPQAQALPQPGPEWQAAW), and 1030 to 1068 (WAASTRLLLRVRYAPSELVLTAGWLGSLGLRPPPEWLQA). A 9 X 38 AA approximate repeats region spans residues 483–1068 (LVLELSRARL…LRPPPEWLQA (586 aa)).

In terms of assembly, part of a 400 kDa complex which is not stably associated with RNA.

It localises to the plastid. The protein localises to the chloroplast stroma. Functionally, required for expression of the chloroplast encoded psbC mRNA, most likely for translation initiation. Interacts with the 5'-UTR of psbC. This is Tbc2 translation factor, chloroplastic (TBC2) from Chlamydomonas reinhardtii (Chlamydomonas smithii).